Reading from the N-terminus, the 176-residue chain is Large ribosomal subunit protein uL6 (176 aa).

This sequence belongs to the universal ribosomal protein uL6 family. Part of the 50S ribosomal subunit.

This protein binds to the 23S rRNA, and is important in its secondary structure. It is located near the subunit interface in the base of the L7/L12 stalk, and near the tRNA binding site of the peptidyltransferase center. The protein is Large ribosomal subunit protein uL6 of Paraburkholderia xenovorans (strain LB400).